The sequence spans 466 residues: ATP synthase subunit beta (466 aa).

148–155 (GGAGVGKT) is an ATP binding site.

The protein belongs to the ATPase alpha/beta chains family. As to quaternary structure, F-type ATPases have 2 components, CF(1) - the catalytic core - and CF(0) - the membrane proton channel. CF(1) has five subunits: alpha(3), beta(3), gamma(1), delta(1), epsilon(1). CF(0) has three main subunits: a(1), b(2) and c(9-12). The alpha and beta chains form an alternating ring which encloses part of the gamma chain. CF(1) is attached to CF(0) by a central stalk formed by the gamma and epsilon chains, while a peripheral stalk is formed by the delta and b chains.

Its subcellular location is the cell inner membrane. It catalyses the reaction ATP + H2O + 4 H(+)(in) = ADP + phosphate + 5 H(+)(out). In terms of biological role, produces ATP from ADP in the presence of a proton gradient across the membrane. The catalytic sites are hosted primarily by the beta subunits. In Xylella fastidiosa (strain M23), this protein is ATP synthase subunit beta.